A 114-amino-acid chain; its full sequence is Iron-sulfur cluster insertion protein ErpA (114 aa).

3 residues coordinate iron-sulfur cluster: C42, C106, and C108.

The protein belongs to the HesB/IscA family. Homodimer. Iron-sulfur cluster serves as cofactor.

In terms of biological role, required for insertion of 4Fe-4S clusters for at least IspG. In Haemophilus influenzae (strain PittGG), this protein is Iron-sulfur cluster insertion protein ErpA.